The chain runs to 277 residues: Membrane protein insertase YidC 2 (277 aa).

Residues 1-22 form the signal peptide; it reads MKKYRKILAMLAVLAIVLVLSG. Residue Cys23 is the site of N-palmitoyl cysteine attachment. Cys23 carries S-diacylglycerol cysteine lipidation. 5 helical membrane passes run 35–55, 60–80, 130–150, 170–190, and 208–228; these read FWDG…SNLF, GLGI…LMIF, ASML…QAIW, PYYV…WLAM, and PVII…YWVI. Residues 251 to 266 are compositionally biased toward basic and acidic residues; that stretch reads EAKKQAERDRKRTLEK. The interval 251–277 is disordered; it reads EAKKQAERDRKRTLEKARKRAIRNHKR. A compositionally biased stretch (basic residues) spans 267–277; sequence ARKRAIRNHKR.

The protein belongs to the OXA1/ALB3/YidC family. Type 2 subfamily.

Its subcellular location is the cell membrane. In terms of biological role, required for the insertion and/or proper folding and/or complex formation of integral membrane proteins into the membrane. Involved in integration of membrane proteins that insert both dependently and independently of the Sec translocase complex, as well as at least some lipoproteins. The chain is Membrane protein insertase YidC 2 from Lactiplantibacillus plantarum (strain ATCC BAA-793 / NCIMB 8826 / WCFS1) (Lactobacillus plantarum).